The sequence spans 512 residues: 23S rRNA (uracil(1939)-C(5))-methyltransferase RlmD (512 aa).

Residues 1 to 14 are compositionally biased toward low complexity; that stretch reads MQPTDSKTSTSDTT. A disordered region spans residues 1–45; the sequence is MQPTDSKTSTSDTTEQPNETQTITIPPSKKKSKPSSKTRRRLKDA. Polar residues predominate over residues 15 to 25; the sequence is EQPNETQTITI. A compositionally biased stretch (basic residues) spans 28-42; the sequence is SKKKSKPSSKTRRRL. Residues 41–113 enclose the TRAM domain; the sequence is RLKDAEPLPF…TSFEEGDAVN (73 aa). 4 residues coordinate [4Fe-4S] cluster: cysteine 127, cysteine 133, cysteine 136, and cysteine 215. S-adenosyl-L-methionine-binding residues include glutamine 340, phenylalanine 369, asparagine 374, glutamate 393, aspartate 420, and aspartate 441. The active-site Nucleophile is cysteine 467.

It belongs to the class I-like SAM-binding methyltransferase superfamily. RNA M5U methyltransferase family. RlmD subfamily.

It carries out the reaction uridine(1939) in 23S rRNA + S-adenosyl-L-methionine = 5-methyluridine(1939) in 23S rRNA + S-adenosyl-L-homocysteine + H(+). Its function is as follows. Catalyzes the formation of 5-methyl-uridine at position 1939 (m5U1939) in 23S rRNA. In Psychrobacter arcticus (strain DSM 17307 / VKM B-2377 / 273-4), this protein is 23S rRNA (uracil(1939)-C(5))-methyltransferase RlmD.